A 177-amino-acid chain; its full sequence is Large ribosomal subunit protein uL6 (177 aa).

Belongs to the universal ribosomal protein uL6 family. Part of the 50S ribosomal subunit.

Functionally, this protein binds to the 23S rRNA, and is important in its secondary structure. It is located near the subunit interface in the base of the L7/L12 stalk, and near the tRNA binding site of the peptidyltransferase center. The protein is Large ribosomal subunit protein uL6 of Novosphingobium aromaticivorans (strain ATCC 700278 / DSM 12444 / CCUG 56034 / CIP 105152 / NBRC 16084 / F199).